The chain runs to 78 residues: Large ribosomal subunit protein eL20 (78 aa).

Belongs to the eukaryotic ribosomal protein eL20 family. In terms of assembly, part of the 50S ribosomal subunit. Binds 23S rRNA.

This chain is Large ribosomal subunit protein eL20, found in Nanoarchaeum equitans (strain Kin4-M).